The chain runs to 1284 residues: Peroxisomal ATPase PEX1 (1284 aa).

Positions 339 to 373 (SPKQQQDKSKQGVLLPDKEKQLSKSPDHKQISSNR) are disordered. Positions 343–373 (QQDKSKQGVLLPDKEKQLSKSPDHKQISSNR) are enriched in basic and acidic residues. Residues 600 to 607 (GGKGSGKS) and 882 to 889 (GPPGTGKT) contribute to the ATP site. A phosphoserine mark is found at Ser-1182, Ser-1210, and Ser-1212. A disordered region spans residues 1261 to 1284 (FQNPKKRKNQSGTVFRTGQKVTLA). Over residues 1270–1284 (QSGTVFRTGQKVTLA) the composition is skewed to polar residues.

The protein belongs to the AAA ATPase family. Homooligomer; homooligomerizes in the cytosol, interaction with PEX6 promotes dissociation of the homooligomer. Interacts with PEX6; forming the PEX1-PEX6 AAA ATPase complex, which is composed of a heterohexamer formed by a trimer of PEX1-PEX6 dimers. Interacts indirectly with PEX26, via its interaction with PEX6.

It localises to the cytoplasm. It is found in the cytosol. The protein resides in the peroxisome membrane. The enzyme catalyses ATP + H2O = ADP + phosphate + H(+). In terms of biological role, component of the PEX1-PEX6 AAA ATPase complex, a protein dislocase complex that mediates the ATP-dependent extraction of the PEX5 receptor from peroxisomal membranes, an essential step for PEX5 recycling. Specifically recognizes PEX5 monoubiquitinated at 'Cys-11', and pulls it out of the peroxisome lumen through the PEX2-PEX10-PEX12 retrotranslocation channel. Extraction by the PEX1-PEX6 AAA ATPase complex is accompanied by unfolding of the TPR repeats and release of bound cargo from PEX5. In Mus musculus (Mouse), this protein is Peroxisomal ATPase PEX1.